Reading from the N-terminus, the 598-residue chain is Mitogen-activated protein kinase 19 (598 aa).

The region spanning 25 to 316 is the Protein kinase domain; the sequence is YRILEVIGKG…AAEALADPYF (292 aa). Residues 31 to 39 and Lys54 each bind ATP; that span reads IGKGSYGVV. Asp151 serves as the catalytic Proton acceptor. Position 187 is a phosphothreonine (Thr187). Positions 187–189 match the TXY motif; the sequence is TDY. At Tyr189 the chain carries Phosphotyrosine. A Phosphothreonine modification is found at Thr192. Residues 396–486 are disordered; the sequence is GKSGPVIPPD…VTYENDRNLK (91 aa). A compositionally biased stretch (low complexity) spans 414-425; that stretch reads SAVHSSAVNSNA.

It belongs to the protein kinase superfamily. CMGC Ser/Thr protein kinase family. MAP kinase subfamily. Post-translationally, dually phosphorylated on Thr-187 and Tyr-189, which activates the enzyme.

It catalyses the reaction L-seryl-[protein] + ATP = O-phospho-L-seryl-[protein] + ADP + H(+). It carries out the reaction L-threonyl-[protein] + ATP = O-phospho-L-threonyl-[protein] + ADP + H(+). With respect to regulation, activated by threonine and tyrosine phosphorylation. In Arabidopsis thaliana (Mouse-ear cress), this protein is Mitogen-activated protein kinase 19 (MPK19).